We begin with the raw amino-acid sequence, 279 residues long: Vacuolar iron transporter cccA (279 aa).

The segment at 1–44 (MLGGRHSHWSPQDLEEQAFSPYGTFPPSPTESTETSSSISSTRP) is disordered. The segment covering 30–44 (TESTETSSSISSTRP) has biased composition (low complexity). The next 5 membrane-spanning stretches (helical) occupy residues 55-75 (ILGLSDGLTVPFALSAGLSAL), 80-100 (VVVVGGLAELVAGAISMGLGG), 185-205 (ITLALGYFIGGFIPLIPYFMV), 208-228 (VLVALYYSIGIMIFTLLVFGY), and 243-263 (IVAGIKGGLQMVVVGGLAAGA).

This sequence belongs to the CCC1 family.

The protein resides in the vacuole membrane. It carries out the reaction Fe(2+)(in) = Fe(2+)(out). In terms of biological role, vacuolar iron transporter involved in the transfer of iron from the cytosol to the vacuole for intracellular iron storage. Plays an essential role in iron detoxification during high iron conditions. The sequence is that of Vacuolar iron transporter cccA from Arthroderma benhamiae (strain ATCC MYA-4681 / CBS 112371) (Trichophyton mentagrophytes).